Consider the following 250-residue polypeptide: Petrobactin import ATP-binding protein FatE (250 aa).

One can recognise an ABC transporter domain in the interval 2-236 (IKIDNVKKFY…TLLTDIFETR (235 aa)). 34–41 (GPNGAGKS) is a binding site for ATP.

This sequence belongs to the ABC transporter superfamily. The complex is composed of two ATP-binding proteins (FatE), two transmembrane proteins (FatC and FatD) and a solute-binding protein (FpuA).

Its subcellular location is the cell membrane. It catalyses the reaction a Fe(III)-siderophore(out) + ATP + H2O = a Fe(III)-siderophore(in) + ADP + phosphate + H(+). Part of an ABC transporter complex involved in ferric-petrobactin uptake. Probably responsible for energy coupling to the transport system. This is Petrobactin import ATP-binding protein FatE from Bacillus anthracis.